The sequence spans 340 residues: Glycerol-3-phosphate dehydrogenase [NAD(P)+] (340 aa).

S23, W24, R43, K44, and K113 together coordinate NADPH. 3 residues coordinate sn-glycerol 3-phosphate: K113, G141, and T143. A145 serves as a coordination point for NADPH. Sn-glycerol 3-phosphate-binding residues include K196, D249, S259, R260, and N261. K196 (proton acceptor) is an active-site residue. Position 260 (R260) interacts with NADPH. NADPH is bound at residue E286.

Belongs to the NAD-dependent glycerol-3-phosphate dehydrogenase family.

The protein localises to the cytoplasm. It carries out the reaction sn-glycerol 3-phosphate + NAD(+) = dihydroxyacetone phosphate + NADH + H(+). The enzyme catalyses sn-glycerol 3-phosphate + NADP(+) = dihydroxyacetone phosphate + NADPH + H(+). It functions in the pathway membrane lipid metabolism; glycerophospholipid metabolism. Its function is as follows. Catalyzes the reduction of the glycolytic intermediate dihydroxyacetone phosphate (DHAP) to sn-glycerol 3-phosphate (G3P), the key precursor for phospholipid synthesis. This is Glycerol-3-phosphate dehydrogenase [NAD(P)+] from Zymomonas mobilis subsp. mobilis (strain ATCC 31821 / ZM4 / CP4).